The primary structure comprises 147 residues: Ubiquitin-conjugating enzyme E2-16 kDa (147 aa).

In terms of domain architecture, UBC core spans 1–147; it reads MALKRINKEL…AREWTRKYAI (147 aa). Residue C107 is the Glycyl thioester intermediate of the active site.

It belongs to the ubiquitin-conjugating enzyme family.

It catalyses the reaction S-ubiquitinyl-[E1 ubiquitin-activating enzyme]-L-cysteine + [E2 ubiquitin-conjugating enzyme]-L-cysteine = [E1 ubiquitin-activating enzyme]-L-cysteine + S-ubiquitinyl-[E2 ubiquitin-conjugating enzyme]-L-cysteine.. The protein operates within protein modification; protein ubiquitination. In terms of biological role, catalyzes the covalent attachment of ubiquitin to other proteins. In Pyricularia oryzae (strain 70-15 / ATCC MYA-4617 / FGSC 8958) (Rice blast fungus), this protein is Ubiquitin-conjugating enzyme E2-16 kDa (UBC1).